The chain runs to 175 residues: Ribosome-binding factor A (175 aa).

Residues 131–175 (KPAGEADPYRDRGSVDEPSDAGGLVIRTSDGLEAENTGDDYQAED) form a disordered region. Acidic residues predominate over residues 162-175 (LEAENTGDDYQAED).

It belongs to the RbfA family. As to quaternary structure, monomer. Binds 30S ribosomal subunits, but not 50S ribosomal subunits or 70S ribosomes.

The protein resides in the cytoplasm. Functionally, one of several proteins that assist in the late maturation steps of the functional core of the 30S ribosomal subunit. Associates with free 30S ribosomal subunits (but not with 30S subunits that are part of 70S ribosomes or polysomes). Required for efficient processing of 16S rRNA. May interact with the 5'-terminal helix region of 16S rRNA. The protein is Ribosome-binding factor A of Mycobacterium ulcerans (strain Agy99).